The chain runs to 181 residues: Cyclic AMP-dependent transcription factor ATF-3 (181 aa).

Positions 73-97 (EMSVTKSEAAPEEDERKRRRRERNK) are disordered. Lys-78 participates in a covalent cross-link: Glycyl lysine isopeptide (Lys-Gly) (interchain with G-Cter in SUMO2). Positions 86–149 (DERKRRRRER…QHLIYMLNLH (64 aa)) constitute a bZIP domain. A basic motif region spans residues 88–110 (RKRRRRERNKIAAAKCRNKKKEK). Positions 114 to 142 (LQKESEKLESVNAELKAQIEELKNEKQHL) are leucine-zipper. A Phosphothreonine modification is found at Thr-162. Lys-175 participates in a covalent cross-link: Glycyl lysine isopeptide (Lys-Gly) (interchain with G-Cter in SUMO2).

This sequence belongs to the bZIP family. ATF subfamily. Binds DNA as a homodimer or a heterodimer. Interacts with KAT5; promoting KAT5 autoacetylation and KAT5 deubiquitination by USP7.

Its subcellular location is the nucleus. In terms of biological role, this protein binds the cAMP response element (CRE) (consensus: 5'-GTGACGT[AC][AG]-3'), a sequence present in many viral and cellular promoters. Represses transcription from promoters with ATF sites. It may repress transcription by stabilizing the binding of inhibitory cofactors at the promoter. This Mus musculus (Mouse) protein is Cyclic AMP-dependent transcription factor ATF-3.